We begin with the raw amino-acid sequence, 400 residues long: Queuine tRNA-ribosyltransferase (400 aa).

Catalysis depends on D93, which acts as the Proton acceptor. Substrate contacts are provided by residues 93 to 97 (DSGGF), D166, and G247. An RNA binding region spans residues 277–283 (GIGDVDD). The active-site Nucleophile is the D296. The segment at 301-305 (TRLGR) is RNA binding; important for wobble base 34 recognition. Zn(2+)-binding residues include C338, C340, C343, and H369.

The protein belongs to the queuine tRNA-ribosyltransferase family. As to quaternary structure, homodimer. Within each dimer, one monomer is responsible for RNA recognition and catalysis, while the other monomer binds to the replacement base PreQ1. It depends on Zn(2+) as a cofactor.

It carries out the reaction 7-aminomethyl-7-carbaguanine + guanosine(34) in tRNA = 7-aminomethyl-7-carbaguanosine(34) in tRNA + guanine. The protein operates within tRNA modification; tRNA-queuosine biosynthesis. Functionally, catalyzes the base-exchange of a guanine (G) residue with the queuine precursor 7-aminomethyl-7-deazaguanine (PreQ1) at position 34 (anticodon wobble position) in tRNAs with GU(N) anticodons (tRNA-Asp, -Asn, -His and -Tyr). Catalysis occurs through a double-displacement mechanism. The nucleophile active site attacks the C1' of nucleotide 34 to detach the guanine base from the RNA, forming a covalent enzyme-RNA intermediate. The proton acceptor active site deprotonates the incoming PreQ1, allowing a nucleophilic attack on the C1' of the ribose to form the product. After dissociation, two additional enzymatic reactions on the tRNA convert PreQ1 to queuine (Q), resulting in the hypermodified nucleoside queuosine (7-(((4,5-cis-dihydroxy-2-cyclopenten-1-yl)amino)methyl)-7-deazaguanosine). The chain is Queuine tRNA-ribosyltransferase from Roseiflexus sp. (strain RS-1).